A 148-amino-acid polypeptide reads, in one-letter code: uncharacterized protein (148 aa).

The disordered stretch occupies residues methionine 1 to leucine 108. The segment covering arginine 22–arginine 42 has biased composition (basic residues). Positions aspartate 88 to arginine 97 are enriched in polar residues.

This is an uncharacterized protein from Homo sapiens (Human).